A 475-amino-acid chain; its full sequence is MAAAVQRGLPVAGGGESSESEDDGWEIGYLDRASQKLTSPLPTEEKNEIFKKALTTGDISLVEELLDSGISVESSFRYGWTPLMYAASVANVELVRVLLDRGANASFEKDKHTVLITACSARGSQEQILKCVELLLSRNADPNVACRRLMTPIMYAARDGHPQVVALLVAQGAEVNAQDENGYTALTWAARQGHKNVVLKLLELGANKMLQTKDGKTPSEVANKNKHPEIFSLLSLTLNPLEGKLQQLTKEETICKLLTTDSDKEKDYIFSSYAAFGDLEIFLYGLGLEHMTDLLKERDISLRHLLTMRKDEFSKNGIASRDQQKILAALKELAVEEIKFGELPEVAKLEISGDEFLSFLLKLNKQCGHLITAVQNIITELPVSSHKIVLEWASPQNFTSVCEELVSNVEDLSEEVCKLKDLIQKLQNERENDPTHIPSVEEASPWRSRILKRTAVTVCGFGFLLFICKLTFQRK.

Residues methionine 1–glycine 24 are disordered. Residues serine 17, serine 18, and serine 20 each carry the phosphoserine modification. ANK repeat units follow at residues glutamate 45 to serine 74, tyrosine 78 to phenylalanine 107, aspartate 110 to valine 144, arginine 148 to alanine 177, asparagine 181 to leucine 210, and aspartate 214 to glycine 243. One can recognise an SAM domain in the interval serine 272 to alanine 334.

Interacts with DDX4, PIWIL1, RANBP9 and TDRD1.

The protein resides in the cytoplasm. In terms of biological role, plays a central role during spermatogenesis by repressing transposable elements and preventing their mobilization, which is essential for the germline integrity. Acts via the piRNA metabolic process, which mediates the repression of transposable elements during meiosis by forming complexes composed of piRNAs and Piwi proteins and governs the methylation and subsequent repression of transposons. Its association with pi-bodies suggests a participation in the primary piRNAs metabolic process. Required prior to the pachytene stage to facilitate the production of multiple types of piRNAs, including those associated with repeats involved in the regulation of retrotransposons. May act by mediating protein-protein interactions during germ cell maturation. The sequence is that of Ankyrin repeat, SAM and basic leucine zipper domain-containing protein 1 (ASZ1) from Loxodonta africana (African elephant).